Here is a 522-residue protein sequence, read N- to C-terminus: Tetratricopeptide repeat protein 39C (522 aa).

3 TPR repeats span residues 254–287, 292–325, and 424–457; these read SLFM…AVDQ, HVCL…SRWS, and GLKH…ESCR.

This sequence belongs to the TTC39 family.

This Rattus norvegicus (Rat) protein is Tetratricopeptide repeat protein 39C (Ttc39c).